Here is a 584-residue protein sequence, read N- to C-terminus: Beta-fructofuranosidase, insoluble isoenzyme CWINV1 (584 aa).

An N-terminal signal peptide occupies residues 1-28 (MTKEVCSNIGLWLLLTLLIGNYVVNLEA). Substrate contacts are provided by residues 63-66 (WMND), Gln-82, Trp-90, and 125-126 (WS). Asp-66 is a catalytic residue. Residues Asn-159 and Asn-186 are each glycosylated (N-linked (GlcNAc...) asparagine). Substrate is bound by residues 191 to 192 (RD), Glu-246, and Asp-282. Asn-342 and Asn-446 each carry an N-linked (GlcNAc...) asparagine glycan. A disulfide bridge connects residues Cys-442 and Cys-491.

This sequence belongs to the glycosyl hydrolase 32 family. In terms of tissue distribution, expressed in seedlings, leaves, flowers, and seeds.

The protein localises to the secreted. It is found in the extracellular space. The protein resides in the apoplast. Its subcellular location is the cell wall. The catalysed reaction is Hydrolysis of terminal non-reducing beta-D-fructofuranoside residues in beta-D-fructofuranosides.. Functionally, beta-fructofuranosidase that can use sucrose and 1-kestose, and, to a lower extent, neokestose and levan, as substrates, but not inuline. The chain is Beta-fructofuranosidase, insoluble isoenzyme CWINV1 (CWINV1) from Arabidopsis thaliana (Mouse-ear cress).